The chain runs to 464 residues: Phosphoglucosamine mutase (464 aa).

The active-site Phosphoserine intermediate is serine 112. The Mg(2+) site is built by serine 112, aspartate 252, aspartate 254, and aspartate 256. Serine 112 carries the post-translational modification Phosphoserine.

The protein belongs to the phosphohexose mutase family. Mg(2+) is required as a cofactor. In terms of processing, activated by phosphorylation.

The catalysed reaction is alpha-D-glucosamine 1-phosphate = D-glucosamine 6-phosphate. Functionally, catalyzes the conversion of glucosamine-6-phosphate to glucosamine-1-phosphate. The polypeptide is Phosphoglucosamine mutase (Synechococcus sp. (strain CC9902)).